The chain runs to 428 residues: Trigger factor (428 aa).

A PPIase FKBP-type domain is found at 163 to 248 (GNIAVIDFKG…VKEIKVKELP (86 aa)).

Belongs to the FKBP-type PPIase family. Tig subfamily.

Its subcellular location is the cytoplasm. It catalyses the reaction [protein]-peptidylproline (omega=180) = [protein]-peptidylproline (omega=0). Functionally, involved in protein export. Acts as a chaperone by maintaining the newly synthesized protein in an open conformation. Functions as a peptidyl-prolyl cis-trans isomerase. This chain is Trigger factor, found in Clostridium perfringens (strain ATCC 13124 / DSM 756 / JCM 1290 / NCIMB 6125 / NCTC 8237 / Type A).